Consider the following 486-residue polypeptide: Protein nucleotidyltransferase YdiU (486 aa).

Positions 90, 92, 93, 113, 125, 126, 176, and 183 each coordinate ATP. Aspartate 252 acts as the Proton acceptor in catalysis. Mg(2+)-binding residues include asparagine 253 and aspartate 262. Residue aspartate 262 coordinates ATP.

The protein belongs to the SELO family. Mg(2+) is required as a cofactor. Mn(2+) serves as cofactor.

It catalyses the reaction L-seryl-[protein] + ATP = 3-O-(5'-adenylyl)-L-seryl-[protein] + diphosphate. The catalysed reaction is L-threonyl-[protein] + ATP = 3-O-(5'-adenylyl)-L-threonyl-[protein] + diphosphate. The enzyme catalyses L-tyrosyl-[protein] + ATP = O-(5'-adenylyl)-L-tyrosyl-[protein] + diphosphate. It carries out the reaction L-histidyl-[protein] + UTP = N(tele)-(5'-uridylyl)-L-histidyl-[protein] + diphosphate. It catalyses the reaction L-seryl-[protein] + UTP = O-(5'-uridylyl)-L-seryl-[protein] + diphosphate. The catalysed reaction is L-tyrosyl-[protein] + UTP = O-(5'-uridylyl)-L-tyrosyl-[protein] + diphosphate. In terms of biological role, nucleotidyltransferase involved in the post-translational modification of proteins. It can catalyze the addition of adenosine monophosphate (AMP) or uridine monophosphate (UMP) to a protein, resulting in modifications known as AMPylation and UMPylation. This chain is Protein nucleotidyltransferase YdiU, found in Pseudomonas paraeruginosa (strain DSM 24068 / PA7) (Pseudomonas aeruginosa (strain PA7)).